The following is a 93-amino-acid chain: U12-lycotoxin-Ls1c (93 aa).

The signal sequence occupies residues 1–18 (MKFAVILLFSLVVLAVAS). Positions 19–38 (ESVEEVRREIDIEDLPEQQR) are excised as a propeptide.

It belongs to the neurotoxin 31 family. Contains 5 disulfide bonds. In terms of tissue distribution, expressed by the venom gland.

Its subcellular location is the secreted. The polypeptide is U12-lycotoxin-Ls1c (Lycosa singoriensis (Wolf spider)).